The chain runs to 431 residues: Serine hydroxymethyltransferase (431 aa).

(6S)-5,6,7,8-tetrahydrofolate is bound by residues Leu-121 and Gly-125–Leu-127. Lys-230 carries the post-translational modification N6-(pyridoxal phosphate)lysine. Ser-369–Phe-371 is a binding site for (6S)-5,6,7,8-tetrahydrofolate.

The protein belongs to the SHMT family. As to quaternary structure, homodimer. Requires pyridoxal 5'-phosphate as cofactor.

It is found in the cytoplasm. It carries out the reaction (6R)-5,10-methylene-5,6,7,8-tetrahydrofolate + glycine + H2O = (6S)-5,6,7,8-tetrahydrofolate + L-serine. Its pathway is one-carbon metabolism; tetrahydrofolate interconversion. It participates in amino-acid biosynthesis; glycine biosynthesis; glycine from L-serine: step 1/1. Catalyzes the reversible interconversion of serine and glycine with tetrahydrofolate (THF) serving as the one-carbon carrier. This reaction serves as the major source of one-carbon groups required for the biosynthesis of purines, thymidylate, methionine, and other important biomolecules. Also exhibits THF-independent aldolase activity toward beta-hydroxyamino acids, producing glycine and aldehydes, via a retro-aldol mechanism. The chain is Serine hydroxymethyltransferase from Cytophaga hutchinsonii (strain ATCC 33406 / DSM 1761 / CIP 103989 / NBRC 15051 / NCIMB 9469 / D465).